We begin with the raw amino-acid sequence, 322 residues long: Elongation factor P--(R)-beta-lysine ligase (322 aa).

75 to 77 (SPE) is a binding site for substrate. 99–101 (RNE) serves as a coordination point for ATP. Tyr-117 is a binding site for substrate. Position 241-242 (241-242 (EL)) interacts with ATP. Glu-248 is a substrate binding site. Gly-297 serves as a coordination point for ATP.

Belongs to the class-II aminoacyl-tRNA synthetase family. EpmA subfamily. Homodimer.

The catalysed reaction is D-beta-lysine + L-lysyl-[protein] + ATP = N(6)-((3R)-3,6-diaminohexanoyl)-L-lysyl-[protein] + AMP + diphosphate + H(+). Its function is as follows. With EpmB is involved in the beta-lysylation step of the post-translational modification of translation elongation factor P (EF-P). Catalyzes the ATP-dependent activation of (R)-beta-lysine produced by EpmB, forming a lysyl-adenylate, from which the beta-lysyl moiety is then transferred to the epsilon-amino group of a conserved specific lysine residue in EF-P. The polypeptide is Elongation factor P--(R)-beta-lysine ligase (Avibacterium paragallinarum (Haemophilus gallinarum)).